The sequence spans 451 residues: Chromosomal replication initiator protein DnaA (451 aa).

Positions 1–77 are domain I, interacts with DnaA modulators; it reads MTENEQIFWN…EVYNAQISVD (77 aa). The interval 77–110 is domain II; sequence DYVFEEDLMIEQNQTKINQKPKQQALNSLPTVTS. Residues 111-329 are domain III, AAA+ region; sequence DLNSKYSFEN…GALKDISLGA (219 aa). ATP-binding residues include glycine 155, glycine 157, lysine 158, and threonine 159. The domain IV, binds dsDNA stretch occupies residues 330-451; sequence NFKQIDTITV…EIETIKNKIK (122 aa).

The protein belongs to the DnaA family. Oligomerizes as a right-handed, spiral filament on DNA at oriC.

It localises to the cytoplasm. Functionally, plays an essential role in the initiation and regulation of chromosomal replication. ATP-DnaA binds to the origin of replication (oriC) to initiate formation of the DNA replication initiation complex once per cell cycle. Binds the DnaA box (a 9 base pair repeat at the origin) and separates the double-stranded (ds)DNA. Forms a right-handed helical filament on oriC DNA; dsDNA binds to the exterior of the filament while single-stranded (ss)DNA is stabiized in the filament's interior. The ATP-DnaA-oriC complex binds and stabilizes one strand of the AT-rich DNA unwinding element (DUE), permitting loading of DNA polymerase. After initiation quickly degrades to an ADP-DnaA complex that is not apt for DNA replication. Binds acidic phospholipids. The chain is Chromosomal replication initiator protein DnaA from Streptococcus pyogenes serotype M49 (strain NZ131).